Here is a 150-residue protein sequence, read N- to C-terminus: Small ribosomal subunit protein uS11y (150 aa).

Serine 19 carries the phosphoserine modification.

Belongs to the universal ribosomal protein uS11 family.

It localises to the cytoplasm. This Arabidopsis thaliana (Mouse-ear cress) protein is Small ribosomal subunit protein uS11y (RPS14B).